A 430-amino-acid polypeptide reads, in one-letter code: Enolase (430 aa).

Q167 serves as a coordination point for (2R)-2-phosphoglycerate. The Proton donor role is filled by E209. D245, E286, and D313 together coordinate Mg(2+). (2R)-2-phosphoglycerate-binding residues include K338, R367, S368, and K389. K338 serves as the catalytic Proton acceptor.

It belongs to the enolase family. Requires Mg(2+) as cofactor.

It localises to the cytoplasm. The protein localises to the secreted. Its subcellular location is the cell surface. The enzyme catalyses (2R)-2-phosphoglycerate = phosphoenolpyruvate + H2O. It participates in carbohydrate degradation; glycolysis; pyruvate from D-glyceraldehyde 3-phosphate: step 4/5. Functionally, catalyzes the reversible conversion of 2-phosphoglycerate (2-PG) into phosphoenolpyruvate (PEP). It is essential for the degradation of carbohydrates via glycolysis. The polypeptide is Enolase (Synechococcus sp. (strain CC9605)).